A 301-amino-acid chain; its full sequence is Large ribosomal subunit protein uL18z (301 aa).

The protein belongs to the universal ribosomal protein uL18 family. Component of the large ribosomal subunit (LSU). In terms of tissue distribution, expressed in seedlings, roots, stems, leaves, inflorescences and siliques.

The protein resides in the cytoplasm. Its subcellular location is the nucleus. It is found in the nucleolus. It localises to the nucleoplasm. Component of the ribosome, a large ribonucleoprotein complex responsible for the synthesis of proteins in the cell. The small ribosomal subunit (SSU) binds messenger RNAs (mRNAs) and translates the encoded message by selecting cognate aminoacyl-transfer RNA (tRNA) molecules. The large subunit (LSU) contains the ribosomal catalytic site termed the peptidyl transferase center (PTC), which catalyzes the formation of peptide bonds, thereby polymerizing the amino acids delivered by tRNAs into a polypeptide chain. The nascent polypeptides leave the ribosome through a tunnel in the LSU and interact with protein factors that function in enzymatic processing, targeting, and the membrane insertion of nascent chains at the exit of the ribosomal tunnel. Seems involved in the regulation of cell proliferation. Essential in leaf polarity establishment, probably having a role for translation in leaf dorsoventral patterning to specify leaf adaxial identity. In Arabidopsis thaliana (Mouse-ear cress), this protein is Large ribosomal subunit protein uL18z.